A 216-amino-acid polypeptide reads, in one-letter code: Adenylate kinase (216 aa).

10 to 15 (GAGKGT) is a binding site for ATP. Residues 30-59 (STGDIFRKNISEKTPLGVKAKEYMDKGQLV) form an NMP region. AMP contacts are provided by residues Thr-31, Arg-36, 57–59 (QLV), 85–88 (GFPR), and Gln-92. An LID region spans residues 126-163 (GRRVCPSCGASYHIKFNPPKIEGLCDVCKKEVIQRKDD). Position 127 (Arg-127) interacts with ATP. Zn(2+) contacts are provided by Cys-130 and Cys-133. ATP is bound at residue 136-137 (SY). Zn(2+)-binding residues include Cys-150 and Cys-153. AMP-binding residues include Arg-160 and Arg-171. Position 199 (Gln-199) interacts with ATP.

This sequence belongs to the adenylate kinase family. As to quaternary structure, monomer.

The protein resides in the cytoplasm. It catalyses the reaction AMP + ATP = 2 ADP. The protein operates within purine metabolism; AMP biosynthesis via salvage pathway; AMP from ADP: step 1/1. In terms of biological role, catalyzes the reversible transfer of the terminal phosphate group between ATP and AMP. Plays an important role in cellular energy homeostasis and in adenine nucleotide metabolism. The protein is Adenylate kinase of Clostridium novyi (strain NT).